An 831-amino-acid polypeptide reads, in one-letter code: Sodium/hydrogen exchanger 3 (831 aa).

The first 28 residues, 1–28 (MWHPALGPGWKPLLALALALTSLRGVRG), serve as a signal peptide directing secretion. Residues 29-48 (IEEEPNSGGSFQIVTFKWHH) lie on the Extracellular side of the membrane. A helical membrane pass occupies residues 49 to 71 (VQDPYIIALWILVASLAKIVFHL). At 72-79 (SHKVTSVV) the chain is on the cytoplasmic side. Residues 80–99 (PESALLIVLGLVLGGIVWAA) form a helical membrane-spanning segment. At 100 to 108 (DHIASFTLT) the chain is on the extracellular side. A helical transmembrane segment spans residues 109–126 (PTLFFFYLLPPIVLDAGY). Topologically, residues 127-129 (FMP) are cytoplasmic. A helical transmembrane segment spans residues 130–165 (NRLFFGNLGTILLYAVIGTIWNAATTGLSLYGVFLS). A 1,2-diacyl-sn-glycero-3-phospho-(1D-myo-inositol) contacts are provided by Gly135, Gly138, and Thr139. At 166–178 (GLMGELKIGLLDF) the chain is on the extracellular side. The chain crosses the membrane as a helical span at residues 179-200 (LLFGSLIAAVDPVAVLAVFEEV). The Cytoplasmic portion of the chain corresponds to 201-202 (HV). The chain crosses the membrane as a helical span at residues 203–234 (NEVLFIIVFGESLLNDAVTVVLYNVFESFVTL). At 235-241 (GGDAVTG) the chain is on the extracellular side. The chain crosses the membrane as a helical span at residues 242–276 (VDCVKGIVSFFVVSLGGTLVGVIFAFLLSLVTRFT). Residues 277-278 (KH) are Cytoplasmic-facing. Residues 279–301 (VRIIEPGFVFVISYLSYLTSEML) form a helical membrane-spanning segment. At 302 to 303 (SL) the chain is on the extracellular side. Residues 304–320 (SAILAITFCGICCQKYV) traverse the membrane as a helical segment. At 321–327 (KANISEQ) the chain is on the cytoplasmic side. Residues 328 to 356 (SATTVRYTMKMLASGAETIIFMFLGISAV) form a helical membrane-spanning segment. Topologically, residues 357–364 (DPVIWTWN) are extracellular. The chain crosses the membrane as a helical span at residues 365–386 (TAFVLLTLVFISVYRAIGVVLQ). The Cytoplasmic segment spans residues 387–399 (TWILNRYRMVQLE). Met395 contributes to the a 1,2-diacyl-sn-glycero-3-phospho-(1D-myo-inositol) binding site. A helical membrane pass occupies residues 400–423 (TIDQVVMSYGGLRGAVAYALVVLL). At 424–430 (DEKKVKE) the chain is on the extracellular side. The helical transmembrane segment at 431–464 (KNLFVSTTLIVVFFTVIFQGLTIKPLVQWLKVKR) threads the bilayer. At 465-831 (SEQREPKLNE…QPASPESTHM (367 aa)) the chain is on the cytoplasmic side. The a 1,2-diacyl-sn-glycero-3-phospho-(1D-myo-inositol) site is built by Gln494, Ile495, and His497. A phosphoserine mark is found at Ser552 and Ser560. The tract at residues 573-587 (RPSTVEASVSYFLRE) is interaction with EZR. The interaction with NHERF4 stretch occupies residues 588-665 (NVSAVCLDMQ…RKRLESFKSA (78 aa)). Residues 589–693 (VSAVCLDMQS…AQKRRNSSIP (105 aa)) are interaction with AHCYL1. 2 positions are modified to phosphoserine: Ser590 and Ser605. Ser661 carries the phosphoserine; by SGK1 modification. Phosphoserine is present on residues Ser716, Ser807, and Ser810. The interval 808-831 (VDSFLQADGPEEQLQPASPESTHM) is disordered. The segment covering 822–831 (QPASPESTHM) has biased composition (polar residues).

The protein belongs to the monovalent cation:p,roton antiporter 1 (CPA1) transporter (TC 2.A.36) family. As to quaternary structure, homodimer. Found in the forms of complex and dynamic macromolecular complexes. Binds NHERF1 and NHERF2. Interacts with NHERF4 and interactions decrease in response to elevated calcium ion levels. Interacts with PDZK1 (via C-terminal PDZ domain). Interacts with CHP1; this interaction increases trafficking and activity at the plasma membrane of SLC9A3. Interacts with CHP2 and SHANK2. Interacts with AHCYL1; the interaction is required for SLC9A3 activity. Interacts with EZR; interaction targets SLC9A3 to the apical membrane. Interacts with SNX27 (via PDZ domains); directs SLC9A3 membrane insertion from early endosomes to the plasma membrane. Post-translationally, phosphorylated by PRKACA at Ser-552 and Ser-605, which inhibits activity. Phosphorylation of Ser-605 is essential for cAMP-mediated inhibition of SLC9A3. Phosphorylation at Ser-661 by SGK1 is associated with increased abundance at the cell membrane. Phosphorylation at Ser-716 by CSNK2A1 regulates SLC9A3 activity through the formation of multiple signaling complexes. Most abundant in colon and small intestine, followed by kidney and stomach. In kidney, expressed in proximal tubules and outer medulla (at protein level).

It localises to the apical cell membrane. The protein resides in the cell membrane. It is found in the recycling endosome membrane. Its subcellular location is the early endosome membrane. The enzyme catalyses Na(+)(in) + H(+)(out) = Na(+)(out) + H(+)(in). Seems to switch between active and inactive modes in response to various stimuli. Activated directly or indirectly by membrane phosphatidylinositol (PIs). Regulated by a variety of auxiliary proteins, which facilitate the maturation, cell surface expression and function of the transporter. Inhibited specifically by the drug tenapanor. Its function is as follows. Plasma membrane Na(+)/H(+) antiporter. Exchanges intracellular H(+) ions for extracellular Na(+) in 1:1 stoichiometry, playing a key role in salt and fluid absorption and pH homeostasis. Major apical Na(+)/H(+) exchanger in kidney and intestine playing an important role in renal and intestine Na(+) absorption and blood pressure regulation. This is Sodium/hydrogen exchanger 3 (Slc9a3) from Rattus norvegicus (Rat).